Here is a 191-residue protein sequence, read N- to C-terminus: Protein Ves (191 aa).

This sequence belongs to the Ves family.

The protein is Protein Ves of Escherichia coli (strain SMS-3-5 / SECEC).